Reading from the N-terminus, the 1003-residue chain is Glycine--tRNA ligase (1003 aa).

The tract at residues 1 to 310 (MSSQPLTLQA…VTPKKIPTIC (310 aa)) is glycine--tRNA ligase alpha subunit. A glycine--tRNA ligase beta subunit region spans residues 311–1003 (QPEDFLLEIG…CFGFYAWDVL (693 aa)).

The protein belongs to the class-II aminoacyl-tRNA synthetase family.

Its subcellular location is the cytoplasm. It catalyses the reaction tRNA(Gly) + glycine + ATP = glycyl-tRNA(Gly) + AMP + diphosphate. This chain is Glycine--tRNA ligase (glyQS), found in Chlamydia trachomatis serovar L2 (strain ATCC VR-902B / DSM 19102 / 434/Bu).